A 300-amino-acid polypeptide reads, in one-letter code: UDP-N-acetylenolpyruvoylglucosamine reductase (300 aa).

The FAD-binding PCMH-type domain occupies 28 to 190; the sequence is KIGGRVKYLV…TRAMMSFKKE (163 aa). The active site involves Arg169. Ser219 acts as the Proton donor in catalysis. Glu290 is a catalytic residue.

The protein belongs to the MurB family. FAD is required as a cofactor.

The protein localises to the cytoplasm. The catalysed reaction is UDP-N-acetyl-alpha-D-muramate + NADP(+) = UDP-N-acetyl-3-O-(1-carboxyvinyl)-alpha-D-glucosamine + NADPH + H(+). It functions in the pathway cell wall biogenesis; peptidoglycan biosynthesis. Cell wall formation. This is UDP-N-acetylenolpyruvoylglucosamine reductase from Thermotoga sp. (strain RQ2).